The sequence spans 411 residues: Putative polysaccharide ligase RC0486 (411 aa).

Helical transmembrane passes span 15–35 (LGML…LISF), 78–98 (GITM…IHLI), 101–121 (LATF…SNSA), 133–153 (LIFG…SNGF), 166–186 (MLDR…IILL), 207–227 (ISDS…FILT), 233–253 (IFFK…PVIA), 328–348 (ILQI…CLVY), 361–381 (NFKA…MISY), and 383–403 (IWQI…KLLV).

This sequence belongs to the O-antigen ligase family.

Its subcellular location is the membrane. In Rickettsia conorii (strain ATCC VR-613 / Malish 7), this protein is Putative polysaccharide ligase RC0486.